A 602-amino-acid polypeptide reads, in one-letter code: Pro-neuregulin-1, membrane-bound isoform (602 aa).

At 1 to 206 the chain is on the extracellular side; the sequence is MWATSEGPLQ…MEAEELYQKR (206 aa). An N-linked (GlcNAc...) asparagine glycan is attached at N21. Residues 29 to 123 enclose the Ig-like C2-type domain; it reads PKLKEMKNQE…DSTKASVIIT (95 aa). The cysteines at positions 49 and 105 are disulfide-linked. Residues N113 and N126 are each glycosylated (N-linked (GlcNAc...) asparagine). Residues 137 to 181 form the EGF-like domain; sequence HLTKCDIKQKAFCVNGGECYMVKDLPNPPRYLCRCPNEFTGDRCQ. Intrachain disulfides connect C141–C155, C149–C169, and C171–C180. The chain crosses the membrane as a helical span at residues 207 to 229; the sequence is VLTITGICIALLVVGIMCVVAYC. At 230–602 the chain is on the cytoplasmic side; that stretch reads KTKKQRKKLH…VIANQDPIAV (373 aa). Disordered regions lie at residues 293–366, 391–421, 460–479, and 486–553; these read ETSF…EGNS, MTTP…PVSS, FNSF…PSPL, and EYET…FLSI. Over residues 294–314 the composition is skewed to low complexity; that stretch reads TSFSTSHYTSTTHHSMTVTQT. A compositionally biased stretch (polar residues) spans 315-324; sequence PSHSWSNGHT. The segment covering 325–341 has biased composition (low complexity); it reads ESILSESHSVLVSSSVE. Residues 460-474 are compositionally biased toward polar residues; sequence FNSFHNNPTHESNSL. Residues 504 to 514 show a composition bias toward basic residues; the sequence is TNSRRVKRTKP. The segment covering 527–536 has biased composition (low complexity); sequence DTSSQSTSSE.

The protein belongs to the neuregulin family. Proteolytic cleavage close to the plasma membrane on the external face leads to the release of the soluble growth factor form. In terms of processing, extensive glycosylation precedes the proteolytic cleavage.

The protein localises to the cell membrane. It localises to the secreted. Functionally, direct ligand for the ERBB tyrosine kinase receptors. The multiple isoforms perform diverse functions: cysteine-rich domain containing isoforms (isoform 2-isoform 4) probably regulate the expression of nicotinic acetylcholine receptors at developing interneuronal synapses. Isoform Ig-NRG is required for the initial induction and/or maintenance of the mature levels of acetylcholine receptors at neuromuscular synapses. Binds to ERBB3 and integrins to form a complex which is essential for NRG1-ERBB signaling. This Gallus gallus (Chicken) protein is Pro-neuregulin-1, membrane-bound isoform (NRG1).